Reading from the N-terminus, the 120-residue chain is Large ribosomal subunit protein uL22 (120 aa).

This sequence belongs to the universal ribosomal protein uL22 family. Part of the 50S ribosomal subunit.

Its function is as follows. This protein binds specifically to 23S rRNA; its binding is stimulated by other ribosomal proteins, e.g. L4, L17, and L20. It is important during the early stages of 50S assembly. It makes multiple contacts with different domains of the 23S rRNA in the assembled 50S subunit and ribosome. In terms of biological role, the globular domain of the protein is located near the polypeptide exit tunnel on the outside of the subunit, while an extended beta-hairpin is found that lines the wall of the exit tunnel in the center of the 70S ribosome. This chain is Large ribosomal subunit protein uL22, found in Crocosphaera subtropica (strain ATCC 51142 / BH68) (Cyanothece sp. (strain ATCC 51142)).